A 761-amino-acid chain; its full sequence is Neurotrypsin (761 aa).

The N-terminal stretch at 1–21 is a signal peptide; it reads MALARCVLAVILGALSVVARA. The tract at residues 25–87 is disordered; that stretch reads SRSPLHRPHP…PPTIPRRCGA (63 aa). Residues 38 to 48 are compositionally biased toward low complexity; sequence RSQHAHYLPSS. Residues 85 to 157 form the Kringle domain; it reads CGAGESWGNA…GKVDWGYCDC (73 aa). 17 cysteine pairs are disulfide-bonded: cysteine 85/cysteine 157, cysteine 101/cysteine 141, cysteine 130/cysteine 155, cysteine 191/cysteine 255, cysteine 204/cysteine 265, cysteine 235/cysteine 245, cysteine 298/cysteine 361, cysteine 311/cysteine 371, cysteine 341/cysteine 351, cysteine 411/cysteine 475, cysteine 424/cysteine 485, cysteine 455/cysteine 465, cysteine 505/cysteine 636, cysteine 547/cysteine 563, cysteine 651/cysteine 717, cysteine 680/cysteine 694, and cysteine 707/cysteine 736. A glycan (N-linked (GlcNAc...) asparagine) is linked at asparagine 93. 3 consecutive SRCR domains span residues 166–267, 273–373, and 386–487; these read IRLV…SCVP, IRLA…TCYP, and IRLV…ICDY. Positions 505-516 are zymogen activation region; sequence CGLRLLHRRQKR. Residues 517–760 form the Peptidase S1 domain; it reads IIGGNNSLRG…FVPWIKSVTS (244 aa). N-linked (GlcNAc...) asparagine glycosylation is present at asparagine 521. The active-site Charge relay system is histidine 562. The N-linked (GlcNAc...) asparagine glycan is linked to asparagine 569. The Charge relay system role is filled by aspartate 612. Serine 711 functions as the Charge relay system in the catalytic mechanism.

It belongs to the peptidase S1 family. Most abundant in cerebral cortex, hippocampus and amygdala.

It is found in the secreted. Its function is as follows. Plays a role in neuronal plasticity and the proteolytic action may subserve structural reorganizations associated with learning and memory operations. In Mus musculus (Mouse), this protein is Neurotrypsin (Prss12).